Here is a 170-residue protein sequence, read N- to C-terminus: Putative apoptosis inhibitor ORF87 (170 aa).

BIR repeat units lie at residues 22–92 (RIKS…PVGK) and 104–169 (RLKS…KLSS).

Its function is as follows. May act as an apoptosis inhibitor. This is Putative apoptosis inhibitor ORF87 from Ostreid herpesvirus 1 (isolate France) (OsHV-1).